Consider the following 724-residue polypeptide: Disks large homolog 4 (724 aa).

S-palmitoyl cysteine attachment occurs at residues Cys3 and Cys5. The interval 15 to 35 is disordered; that stretch reads QDEDTPPLEHSPAHLPNQANS. PDZ domains lie at 65–151 and 160–246; these read EITL…VMRR and EIKL…VAKP. Ser73 and Ser142 each carry phosphoserine. Tyr240 is subject to Phosphotyrosine. Ser295 is subject to Phosphoserine. The PDZ 3 domain occupies 313-393; the sequence is RIVIHRGSTG…QTVTIIAQYK (81 aa). Phosphoserine is present on residues Ser415 and Ser418. Residue Thr420 is modified to Phosphothreonine. Phosphoserine occurs at positions 422, 425, 449, and 480. The 71-residue stretch at 428–498 folds into the SH3 domain; it reads KRGFYIRALF…PSKRRVERRE (71 aa). In terms of domain architecture, Guanylate kinase-like spans 534–709; that stretch reads ARPIIILGPT…IYHKVKRVIE (176 aa). Residue Tyr580 is modified to Phosphotyrosine. 2 positions are modified to phosphoserine: Ser606 and Ser654. Tyr715 is modified (phosphotyrosine).

This sequence belongs to the MAGUK family. Interacts through its PDZ domains with ANO2 and NETO1. Interacts through its first two PDZ domains with GRIN2A, GRIN2B, GRIN2C, GRIN2D. Interacts with ASIC3. Interacts with SEMA4C. Interacts with CXADR. Interacts with KCND2. Interacts with SYNGAP1. Interacts with LRRC4 and LRRC4B. Interacts with ERBB4. Interacts with KCNA1, KCNA2, KCNA3 and KCNA4. Interacts through its first PDZ domain with GRIK2, KCNA4 and CRIPT. Interacts through its second PDZ domain with the PDZ domain of NOS1 or the C-terminus of CAPON. Interacts through its third PDZ domain with NLGN1 and CRIPT, and probably with NLGN2 and NLGN3. Interacts through its guanylate kinase-like domain with KIF13B. Interacts through its guanylate kinase-like domain with DLGAP1/GKAP, DLGAP2, DLGAP3, DLGAP4, MAP1A, BEGAIN and SIPA1L1. Isoform 2 interacts through an L27 domain with HGS/HRS and the first L27 domain of CASK. Interacts with ADR1B and ANKS1B. May interact with HTR2A. Interacts with ADAM22. Interacts with KLHL17 and LGI1. Interacts with FRMPD4 (via C-terminus). Interacts with LRFN1, LRFN2 and LRFN4. Interacts (via N-terminal tandem pair of PDZ domains) with GPER1 (via C-terminus tail motif); the interaction is direct and induces the increase of GPER1 protein levels residing at the plasma membrane surface in a estradiol-independent manner. Interacts (via N-terminus tandem pair of PDZ domains) with NOS1 (via N-terminal domain). Interacts with SHANK3. Interacts with KCNJ4. Interacts with GPR85. Interacts with CACNG2 and MPP2 (via the SH3-Guanylate kinase-like sub-module). Interacts with ADGRB1. Found in a complex with PRR7 and GRIN1. Interacts (via PDZ3 domain and to lesser degree via PDZ2 domain) with PRR7. Component of the postsynaptic hippocampal AMPA-type glutamate receptor (AMPAR) complex, at least composed of pore forming AMPAR subunits GRIA1, GRIA2 and GRIA3 and AMPAR auxiliary proteins SHISA6 and SHISA7. Interacts (via its first two PDZ domains) with SHISA6 and SHISA7 (via PDZ-binding motif); the interaction is direct. Interacts with RPH3A and GRIN2A; this ternary complex regulates NMDA receptor composition at postsynaptic membranes. Interacts with ABR and BCR. Interacts with DGKI (via PDZ-binding motif); controls the localization of DGKI to the synapse. Interacts with C9orf72, SMCR8 and RAB39B. Interacts with ZDHHC5. Interacts with PTEN (via PDZ domain-binding motif); the interaction is induced by NMDA and is required for PTEN location at postsynaptic density. Found in a complex with GRIA1, GRIA2, GRIA3, GRIA4, CACNG8 and CNIH2. Interacts with FAM81A; the interaction facilitates condensate formation via liquid-liquid phase separation. Interacts with ADGRL3. Interacts with SORCS3. In terms of processing, palmitoylated. Palmitoylation is required for targeting to postsynaptic density, plasma membrane and synapses. Palmitoylation by ZDHHC2 occurs when the synaptic activity decreases and induces DLG4 synaptic clustering. Palmitoylation by ZDHHC15 regulates trafficking to the postsynaptic density and function in synaptogenesis. Palmitoylation may play a role in glutamate receptor GRIA1 synapse clustering. Depalmitoylated by ABHD17A and ABHD17B and to a lesser extent by ABHD17C, ABHD12, ABHD13, LYPLA1 and LYPLA2. Undergoes rapid synaptic palmitoylation/depalmitoylation cycles during neuronal development which slow down in mature neurons. Post-translationally, ubiquitinated by MDM2 in response to NMDA receptor activation, leading to proteasome-mediated degradation of DLG4 which is required for AMPA receptor endocytosis. In terms of tissue distribution, brain.

The protein resides in the cell membrane. It is found in the postsynaptic density. The protein localises to the synapse. Its subcellular location is the cytoplasm. It localises to the cell projection. The protein resides in the axon. It is found in the dendritic spine. The protein localises to the dendrite. Its subcellular location is the presynapse. Its function is as follows. Postsynaptic scaffolding protein that plays a critical role in synaptogenesis and synaptic plasticity by providing a platform for the postsynaptic clustering of crucial synaptic proteins. Interacts with the cytoplasmic tail of NMDA receptor subunits and shaker-type potassium channels. Required for synaptic plasticity associated with NMDA receptor signaling. Overexpression or depletion of DLG4 changes the ratio of excitatory to inhibitory synapses in hippocampal neurons. May reduce the amplitude of ASIC3 acid-evoked currents by retaining the channel intracellularly. May regulate the intracellular trafficking of ADR1B. Also regulates AMPA-type glutamate receptor (AMPAR) immobilization at postsynaptic density keeping the channels in an activated state in the presence of glutamate and preventing synaptic depression. Under basal conditions, cooperates with FYN to stabilize palmitoyltransferase ZDHHC5 at the synaptic membrane through FYN-mediated phosphorylation of ZDHHC5 and its subsequent inhibition of association with endocytic proteins. The chain is Disks large homolog 4 from Homo sapiens (Human).